Consider the following 159-residue polypeptide: Probable cyclic pyranopterin monophosphate synthase (159 aa).

Substrate is bound by residues 75–77 (LCH) and 111–112 (ME). The active site involves D126.

The protein belongs to the MoaC family. As to quaternary structure, homohexamer; trimer of dimers.

It catalyses the reaction (8S)-3',8-cyclo-7,8-dihydroguanosine 5'-triphosphate = cyclic pyranopterin phosphate + diphosphate. It functions in the pathway cofactor biosynthesis; molybdopterin biosynthesis. In terms of biological role, catalyzes the conversion of (8S)-3',8-cyclo-7,8-dihydroguanosine 5'-triphosphate to cyclic pyranopterin monophosphate (cPMP). The protein is Probable cyclic pyranopterin monophosphate synthase of Pyrococcus horikoshii (strain ATCC 700860 / DSM 12428 / JCM 9974 / NBRC 100139 / OT-3).